Reading from the N-terminus, the 377-residue chain is E3 ubiquitin-protein ligase RING1 (377 aa).

A necessary for transcriptional repression region spans residues 1-205 (MDGTEIAVSP…GGAGSEDSGD (205 aa)). Position 9 is a phosphoserine (S9). The segment at 19–59 (CPICLDMLKNTMTTKECLHRFCSDCIVTALRSGNKECPTCR) adopts an RING-type zinc-finger fold. Residues S111, S158, and S161 each carry the phosphoserine modification. Disordered regions lie at residues 119–234 (QAMH…GEIE) and 280–325 (QQQE…PSLE). Acidic residues predominate over residues 146-158 (DPGEGEGDGEDVS). The Nuclear localization signal signature appears at 172–175 (KRPR). Residues 176 to 199 (GGGAGGSSVGTGGGGTGGVGGGAG) show a composition bias toward gly residues. A phosphothreonine mark is found at T186 and T191. S200 and S203 each carry phosphoserine. The segment at 201-377 (EDSGDRGGTL…LCYAPTKDPK (177 aa)) is necessary for interaction with CBX2. Residues 206–215 (RGGTLGGGTL) are compositionally biased toward gly residues. Pro residues predominate over residues 217–229 (PPSPPGAPSPPEP). Residues S219 and S225 each carry the phosphoserine modification. Residues 286–314 (EPGGPGGGASDTGGPDGGGGEGGGAGGGD) are compositionally biased toward gly residues.

As to quaternary structure, component of chromatin-associated Polycomb (PcG) complexes. Part of the E2F6.com-1 complex in G0 phase composed of E2F6, MGA, MAX, TFDP1, CBX3, BAT8, EUHMTASE1, RING1, RNF2/RING2 MBLR, L3MBTL2 and YAF2. Interacts with CBX2 and PCGF6. Component of a PRC1-like complex. Component of repressive BCOR complex containing Polycomb group subcomplex at least composed of RYBP, PCGF1, BCOR and RNF2/RING2. Interacts with BMI1, PHC2, PCGF2, RNF2; CBX6, CBX7 and CBX8. Interacts with MN1.

The protein localises to the nucleus speckle. The catalysed reaction is S-ubiquitinyl-[E2 ubiquitin-conjugating enzyme]-L-cysteine + [acceptor protein]-L-lysine = [E2 ubiquitin-conjugating enzyme]-L-cysteine + N(6)-ubiquitinyl-[acceptor protein]-L-lysine.. Its pathway is protein modification; protein ubiquitination. Functionally, constitutes one of the E3 ubiquitin-protein ligases that mediate monoubiquitination of 'Lys-119' of histone H2A, thereby playing a central role in histone code and gene regulation. H2A 'Lys-119' ubiquitination gives a specific tag for epigenetic transcriptional repression and participates in X chromosome inactivation of female mammals. Essential component of a Polycomb group (PcG) multiprotein PRC1-like complex, a complex class required to maintain the transcriptionally repressive state of many genes, including Hox genes, throughout development. PcG PRC1 complex acts via chromatin remodeling and modification of histones, rendering chromatin heritably changed in its expressibility. Compared to RNF2/RING2, it does not have the main E3 ubiquitin ligase activity on histone H2A, and it may rather act as a modulator of RNF2/RING2 activity. The protein is E3 ubiquitin-protein ligase RING1 (RING1) of Gorilla gorilla gorilla (Western lowland gorilla).